The following is a 335-amino-acid chain: Acetyl-coenzyme A carboxylase carboxyl transferase subunit alpha (335 aa).

Residues 40 to 294 (QLETLAARRR…KEAIEKHLNA (255 aa)) enclose the CoA carboxyltransferase C-terminal domain.

The protein belongs to the AccA family. As to quaternary structure, acetyl-CoA carboxylase is a heterohexamer composed of biotin carboxyl carrier protein (AccB), biotin carboxylase (AccC) and two subunits each of ACCase subunit alpha (AccA) and ACCase subunit beta (AccD).

Its subcellular location is the cytoplasm. The catalysed reaction is N(6)-carboxybiotinyl-L-lysyl-[protein] + acetyl-CoA = N(6)-biotinyl-L-lysyl-[protein] + malonyl-CoA. Its pathway is lipid metabolism; malonyl-CoA biosynthesis; malonyl-CoA from acetyl-CoA: step 1/1. Component of the acetyl coenzyme A carboxylase (ACC) complex. First, biotin carboxylase catalyzes the carboxylation of biotin on its carrier protein (BCCP) and then the CO(2) group is transferred by the carboxyltransferase to acetyl-CoA to form malonyl-CoA. The chain is Acetyl-coenzyme A carboxylase carboxyl transferase subunit alpha from Prochlorococcus marinus (strain AS9601).